We begin with the raw amino-acid sequence, 198 residues long: Ribonuclease HII (198 aa).

An RNase H type-2 domain is found at 11–198; it reads ELIAGVDEVG…SPVRKLLENE (188 aa). A divalent metal cation contacts are provided by aspartate 17, glutamate 18, and aspartate 109.

It belongs to the RNase HII family. The cofactor is Mn(2+). Requires Mg(2+) as cofactor.

Its subcellular location is the cytoplasm. It catalyses the reaction Endonucleolytic cleavage to 5'-phosphomonoester.. Its function is as follows. Endonuclease that specifically degrades the RNA of RNA-DNA hybrids. In Mannheimia succiniciproducens (strain KCTC 0769BP / MBEL55E), this protein is Ribonuclease HII.